The following is a 328-amino-acid chain: Probable D,D-dipeptide transport ATP-binding protein DdpD (328 aa).

The ABC transporter domain occupies 6–257; sequence LDIQQLHLSF…PRHPYTIGLL (252 aa). An ATP-binding site is contributed by 42 to 49; the sequence is GESGSGKS.

The protein belongs to the ABC transporter superfamily. As to quaternary structure, the complex is composed of two ATP-binding proteins (DdpD and DdpF), two transmembrane proteins (DdpB and DdpC) and a solute-binding protein (DdpA).

The protein resides in the cell inner membrane. Its function is as follows. Part of the ABC transporter complex DdpABCDF, which is probably involved in D,D-dipeptide transport. Probably responsible for energy coupling to the transport system. This Escherichia coli (strain K12) protein is Probable D,D-dipeptide transport ATP-binding protein DdpD.